The sequence spans 706 residues: Serine/threonine-protein kinase BUR1 (706 aa).

Positions 38-339 constitute a Protein kinase domain; the sequence is YKPLGKIGEG…AIGGKNHAYF (302 aa). Residues 44-52 and K67 each bind ATP; that span reads IGEGTFGEV. Residue D168 is the Proton acceptor of the active site. 3 stretches are compositionally biased toward basic and acidic residues: residues 360–523, 545–570, and 594–623; these read LDNH…RDSR, DYDR…DMTR, and DKVE…KSRD. Positions 360-706 are disordered; the sequence is LDNHKRREQE…YGRKRPRIER (347 aa). A compositionally biased stretch (pro residues) spans 625–648; it reads GPPPGPPLPADGPPPPPSSNPPRP. The segment covering 659 to 706 has biased composition (basic and acidic residues); sequence WRRDSRDRRESRDRDGRDRDGRDRRLSSSRYARDEFDEYGRKRPRIER.

The protein belongs to the protein kinase superfamily. CMGC Ser/Thr protein kinase family. CDC2/CDKX subfamily.

It localises to the nucleus. It catalyses the reaction L-seryl-[protein] + ATP = O-phospho-L-seryl-[protein] + ADP + H(+). It carries out the reaction L-threonyl-[protein] + ATP = O-phospho-L-threonyl-[protein] + ADP + H(+). The catalysed reaction is [DNA-directed RNA polymerase] + ATP = phospho-[DNA-directed RNA polymerase] + ADP + H(+). Functionally, serine/threonine-protein kinase involved in transcription regulation. Phosphorylates the UBC2/RAD6 ubiquitin-conjugating enzyme (E2), leading to monoubiquitination of histone H2B and the silencing of telomeric-associated genes. Also required for histone H3 methylation. Necessary for the recovery from pheromone-induced growth arrest in the cell cycle G1 phase. In Yarrowia lipolytica (strain CLIB 122 / E 150) (Yeast), this protein is Serine/threonine-protein kinase BUR1 (BUR1).